The sequence spans 102 residues: NADH-quinone oxidoreductase subunit K (102 aa).

Helical transmembrane passes span 6–26 (LEHGLAVAGVLFCLGLVGLMV), 30–50 (ILFVLMSLEIMMNAAALAFVV), and 62–82 (VMFILVISLAAAEASIGLAIL).

The protein belongs to the complex I subunit 4L family. NDH-1 is composed of 13 different subunits. Subunits NuoA, H, J, K, L, M, N constitute the membrane sector of the complex.

Its subcellular location is the cell inner membrane. It catalyses the reaction a quinone + NADH + 5 H(+)(in) = a quinol + NAD(+) + 4 H(+)(out). In terms of biological role, NDH-1 shuttles electrons from NADH, via FMN and iron-sulfur (Fe-S) centers, to quinones in the respiratory chain. The immediate electron acceptor for the enzyme in this species is believed to be ubiquinone. Couples the redox reaction to proton translocation (for every two electrons transferred, four hydrogen ions are translocated across the cytoplasmic membrane), and thus conserves the redox energy in a proton gradient. This chain is NADH-quinone oxidoreductase subunit K, found in Pseudomonas syringae pv. syringae (strain B728a).